The chain runs to 312 residues: Probable N-glycosylase/DNA lyase (312 aa).

Residues 1–22 (MRIPVGDFDLEMTQRSGQTSQP) are disordered. The segment covering 13 to 22 (TQRSGQTSQP) has biased composition (polar residues). Lysine 235 is an active-site residue.

The protein belongs to the type-1 OGG1 family.

It catalyses the reaction 2'-deoxyribonucleotide-(2'-deoxyribose 5'-phosphate)-2'-deoxyribonucleotide-DNA = a 3'-end 2'-deoxyribonucleotide-(2,3-dehydro-2,3-deoxyribose 5'-phosphate)-DNA + a 5'-end 5'-phospho-2'-deoxyribonucleoside-DNA + H(+). Functionally, DNA repair enzyme that incises DNA at 8-oxoG residues. Excises 7,8-dihydro-8-oxoguanine and 2,6-diamino-4-hydroxy-5-N-methylformamidopyrimidine (FAPY) from damaged DNA. Has a beta-lyase activity that nicks DNA 3' to the lesion. This is Probable N-glycosylase/DNA lyase from Methanothermobacter thermautotrophicus (strain ATCC 29096 / DSM 1053 / JCM 10044 / NBRC 100330 / Delta H) (Methanobacterium thermoautotrophicum).